The primary structure comprises 284 residues: RCS-specific HTH-type transcriptional activator RclR (284 aa).

An intrachain disulfide couples Cys-21 to Cys-89. Residues 177-278 form the HTH araC/xylS-type domain; the sequence is PRLGAVIQQM…GCTPGEYRER (102 aa). 2 consecutive DNA-binding regions (H-T-H motif) follow at residues 197–218 and 245–268; these read ESLA…RDVS and VVVI…VREF.

With respect to regulation, oxydation of Cys-21 leads to partial activation of RclR, followed by the formation of an intramolecular disulfide bond between Cys-21 and Cys-89, which stabilizes the active form of RclR. Functionally, involved in reactive chlorine species (RCS) stress resistance. Up-regulates, in response to hypochlorous acid (HOCl), the expression of three genes essential for survival of RCS stress (rclA, rclB and rclC) and its own expression. The sequence is that of RCS-specific HTH-type transcriptional activator RclR (rclR) from Escherichia coli (strain K12).